We begin with the raw amino-acid sequence, 276 residues long: Protein MGF 360-15R (276 aa).

This sequence belongs to the asfivirus MGF 360 family.

In terms of biological role, plays a role in virus cell tropism, and may be required for efficient virus replication in macrophages. In Ornithodoros (relapsing fever ticks), this protein is Protein MGF 360-15R.